The chain runs to 190 residues: LOB domain-containing protein 1 (190 aa).

Residues 1–11 (MESKSDASVAT) are compositionally biased toward polar residues. A disordered region spans residues 1–27 (MESKSDASVATTPIISSSSSPPPSLSP). The LOB domain occupies 32 to 133 (SPCAACKILR…AQLAKAQVEM (102 aa)).

The protein belongs to the LOB domain-containing protein family. In terms of tissue distribution, expressed in young shoots, roots, stems, leaves and flowers.

The sequence is that of LOB domain-containing protein 1 (LBD1) from Arabidopsis thaliana (Mouse-ear cress).